We begin with the raw amino-acid sequence, 546 residues long: MDDFPSPEPTDPRLEAMAQKVLEETIITEGDGTIYWALKVTRLLSRVAKKHQCFEAFYDAVIKGDPKTRCCPAHNEKLIGNFGRAIMCVLRAFRFPVIRYESQVKSILTCRHAFNSHSRNVCLNPYHYRWVELPTCQVPPIIVNKELDYGEPPIRTEDALDDWNQKDLKEEQVVASWDVPNVTMRGDEIKLLYDRYAAENGDFQYMNYGNFGSFDGSPCSSTTMSLGSSFASLLQQSNRQDDEEPGYYRSGLSSPASHAASPREFIPNGNDTISLDQEMMDDSEVSDIMHSENFSSENNGNRKPTYADGRPITPIEPRPLYRSSALELGDLSRQAGIYECVEYEESPSWLKLIYYEEGTMIGEKADVEGHHCLIDGFTASRTDSETRSRFSLGWYNNPNRSPQTAEVRGLIGKGVRFYLLAGEVYVENLCNIPVFVQSIGANMKNGFQLNTVSKLPPTGTMKVFDMRLFSKQLRTAAEKTYQDVYCLSRMCTVRVSFCKGWGEHYRRSTVLRSPVWFQAHLNNPMHWVDSVLTCMGAPPRICSSRT.

An MH1 domain is found at 16 to 137 (AMAQKVLEET…YRWVELPTCQ (122 aa)). Disordered stretches follow at residues 234 to 268 (LQQSNRQDDEEPGYYRSGLSSPASHAASPREFIPN) and 292 to 317 (ENFSSENNGNRKPTYADGRPITPIEP). Residues 292–302 (ENFSSENNGNR) are compositionally biased toward polar residues. In terms of domain architecture, MH2 spans 349-546 (WLKLIYYEEG…APPRICSSRT (198 aa)).

It belongs to the dwarfin/SMAD family. In terms of assembly, homodimer. Interacts with R-SMAD daf-14 and co-SMAD daf-3. Interacts with orphan nuclear receptor nhr-69. In terms of tissue distribution, expressed in the excretory cell and gonadal distal tip cells (DTCs).

It localises to the cytoplasm. Its subcellular location is the nucleus. In terms of biological role, probably a receptor-regulated SMAD (R-SMAD) that is an intracellular signal transducer and transcriptional modulator activated by TGF-beta-like daf-7 signaling. Plays a role in TGF-beta-like daf-7 signaling in regulating entry into a developmentally arrested larval state known as dauer, in response to harsh environmental conditions; partially redundant with R-SMAD daf-14. Plays a role in inhibiting mitosis and promoting a switch to meiosis in the germ line, perhaps by down-regulating lag-2 transcription in the gonadal distal tip cells (DTCs). In cooperation with orphan nuclear receptor nhr-69 modulates the Insulin/IGF-1-like signaling (IIS) pathway, perhaps by regulating expression of the potassium channel exp-2, which in turn modulates the secretion of the insulin-like peptide daf-28. This chain is Smad protein daf-8, found in Caenorhabditis elegans.